Consider the following 943-residue polypeptide: Isoleucine--tRNA ligase (943 aa).

The 'HIGH' region motif lies at 58 to 68 (PYANGKIHIGH). E567 serves as a coordination point for L-isoleucyl-5'-AMP. Residues 608-612 (KMSKS) carry the 'KMSKS' region motif. K611 contributes to the ATP binding site. Residues C906, C909, C926, and C929 each contribute to the Zn(2+) site.

Belongs to the class-I aminoacyl-tRNA synthetase family. IleS type 1 subfamily. As to quaternary structure, monomer. Zn(2+) serves as cofactor.

Its subcellular location is the cytoplasm. The catalysed reaction is tRNA(Ile) + L-isoleucine + ATP = L-isoleucyl-tRNA(Ile) + AMP + diphosphate. Catalyzes the attachment of isoleucine to tRNA(Ile). As IleRS can inadvertently accommodate and process structurally similar amino acids such as valine, to avoid such errors it has two additional distinct tRNA(Ile)-dependent editing activities. One activity is designated as 'pretransfer' editing and involves the hydrolysis of activated Val-AMP. The other activity is designated 'posttransfer' editing and involves deacylation of mischarged Val-tRNA(Ile). The protein is Isoleucine--tRNA ligase of Pseudomonas putida (strain ATCC 47054 / DSM 6125 / CFBP 8728 / NCIMB 11950 / KT2440).